A 180-amino-acid polypeptide reads, in one-letter code: Major urinary protein 17 (180 aa).

Residues 1 to 18 (MKMLLLLCLGLTLVCVHA) form the signal peptide. The cysteines at positions 82 and 175 are disulfide-linked.

The protein belongs to the calycin superfamily. Lipocalin family. Because of their involvement in the coordination of social behavior, Mup proteins are thought to exhibit variable expression depending upon gender, age and status of the studied individuals. Expression may also be strain-specific: in strains C57BL/6J and 129S7, transcriptional support is lacking for Mup17.

Its subcellular location is the secreted. Functionally, major urinary proteins (Mups) bind pheromones, thus stabilize them and allow slow release into the air from urine marks. May protect pheromones from oxidation. May also act as pheromones themselves. In this context, they play a role in the regulation of social behaviors, such as aggression, mating, pup-suckling, territory establishment and dominance. This Mus musculus (Mouse) protein is Major urinary protein 17 (Mup17).